Here is a 150-residue protein sequence, read N- to C-terminus: MKYQQLENLESGWKWKYLVKKHREGELITRYIEASAAQAAVDDLLTIENEPVLVHAWIEQHMNPALMNRMKQTIRARRKRHFNAEHQHTRKKSIDLEFVVWQRLAGLAQRRGKTLSETIVQLIEDAEHKEKYASKMSSLKHDLQELLGKE.

Belongs to the MatP family. Homodimer.

It localises to the cytoplasm. Functionally, required for spatial organization of the terminus region of the chromosome (Ter macrodomain) during the cell cycle. Prevents early segregation of duplicated Ter macrodomains during cell division. Binds specifically to matS, which is a 13 bp signature motif repeated within the Ter macrodomain. This Klebsiella pneumoniae (strain 342) protein is Macrodomain Ter protein.